The primary structure comprises 679 residues: Transketolase 10 (679 aa).

His-40 serves as a coordination point for substrate. Thiamine diphosphate contacts are provided by residues His-80 and Gly-129–Leu-131. Asp-170 is a Mg(2+) binding site. The thiamine diphosphate site is built by Gly-171 and Asn-200. Positions 200 and 202 each coordinate Mg(2+). His-277, Arg-371, and Ser-398 together coordinate substrate. Residue His-277 coordinates thiamine diphosphate. Thiamine diphosphate-binding residues include Glu-425 and Phe-452. Glu-425 functions as the Proton donor in the catalytic mechanism. Substrate is bound by residues His-476, Asp-484, and Arg-535.

Belongs to the transketolase family. In terms of assembly, homodimer. The cofactor is Mg(2+). Ca(2+) is required as a cofactor. It depends on Mn(2+) as a cofactor. Requires Co(2+) as cofactor. Thiamine diphosphate serves as cofactor. As to expression, leaves.

The enzyme catalyses D-sedoheptulose 7-phosphate + D-glyceraldehyde 3-phosphate = aldehydo-D-ribose 5-phosphate + D-xylulose 5-phosphate. Its function is as follows. Could be involved in the conversion of sugars, which are a major phenomenon in the rehydration process. Functionally, catalyzes the transfer of a two-carbon ketol group from a ketose donor to an aldose acceptor, via a covalent intermediate with the cofactor thiamine pyrophosphate. This is Transketolase 10 (TKT10) from Craterostigma plantagineum (Blue gem).